Consider the following 140-residue polypeptide: Large-conductance mechanosensitive channel (140 aa).

2 consecutive transmembrane segments (helical) span residues 21 to 41 (VGVI…GDVI) and 82 to 102 (GSFI…FMMI).

It belongs to the MscL family. Homopentamer.

The protein localises to the cell inner membrane. In terms of biological role, channel that opens in response to stretch forces in the membrane lipid bilayer. May participate in the regulation of osmotic pressure changes within the cell. This is Large-conductance mechanosensitive channel from Leptothrix cholodnii (strain ATCC 51168 / LMG 8142 / SP-6) (Leptothrix discophora (strain SP-6)).